We begin with the raw amino-acid sequence, 317 residues long: Lysosomal-associated transmembrane protein 4B (317 aa).

Positions 25–73 are disordered; that stretch reads AFGAKGTDPAEARSSRGIEEAGPRAHGRAGREPERRRSRQQRRGGLQAR. The segment covering 32–59 has biased composition (basic and acidic residues); sequence DPAEARSSRGIEEAGPRAHGRAGREPER. 4 helical membrane-spanning segments follow: residues 117–137, 163–183, 191–211, and 244–264; these read ILLGVWYLIINAVVLLILLSA, MCIAIAISLLMILICAMATYG, WIIPFFCYQIFDFALNMLVAI, and CLVLIILLFISIILTFKGYLI. Residues 205–221 are required for NEDD4 interaction; the sequence is LNMLVAITVLIYPNSIQ.

Belongs to the LAPTM4/LAPTM5 transporter family. As to quaternary structure, homooligomer; upon reaching the lysosomes. Interacts with MCOLN1. Interacts with NEDD4; may play a role in the lysosomal sorting of LAPTM4B; enhances HGS association with NEDD4; mediates inhibition of EGFR degradation. Interacts with PIP5K1C; promotes SNX5 association with LAPTM4B; kinase activity of PIP5K1C is required; interaction is regulated by phosphatidylinositol 4,5-bisphosphate generated by PIP5K1C. Interacts with HGS; promotes HGS ubiquitination. Interacts with SNX5. Interacts with SLC3A2 and SLC7A5; recruits SLC3A2 and SLC7A5 to lysosomes to promote leucine uptake into these organelles and is required for mTORC1 activation. Interacts with LRRC32; decreases TGFB1 production in regulatory T cells. Interacts with BECN1; competes with EGFR for LAPTM4B binding; regulates EGFR activity. Interacts with EGFR; positively correlates with EGFR activation. Post-translationally, undergoes proteolytic cleavage following delivery to the lysosomes. Ubiquitinated by NEDD4.

Its subcellular location is the endomembrane system. The protein resides in the late endosome membrane. It is found in the cell membrane. It localises to the cell projection. The protein localises to the lysosome membrane. Its subcellular location is the endosome membrane. The protein resides in the endosome. It is found in the multivesicular body membrane. It localises to the multivesicular body lumen. In terms of biological role, required for optimal lysosomal function. Blocks EGF-stimulated EGFR intraluminal sorting and degradation. Conversely by binding with the phosphatidylinositol 4,5-bisphosphate, regulates its PIP5K1C interaction, inhibits HGS ubiquitination and relieves LAPTM4B inhibition of EGFR degradation. Recruits SLC3A2 and SLC7A5 (the Leu transporter) to the lysosome, promoting entry of leucine and other essential amino acid (EAA) into the lysosome, stimulating activation of proton-transporting vacuolar (V)-ATPase protein pump (V-ATPase) and hence mTORC1 activation. Plays a role as negative regulator of TGFB1 production in regulatory T cells. Binds ceramide and facilitates its exit from late endosome in order to control cell death pathways. The polypeptide is Lysosomal-associated transmembrane protein 4B (Homo sapiens (Human)).